An 885-amino-acid chain; its full sequence is Cadherin-1 (885 aa).

An N-terminal signal peptide occupies residues 1–26; sequence MGPRYGGAPALLLPLLLLLQVSSGLC. Residues 27–156 constitute a propeptide that is removed on maturation; that stretch reads QEPEPCRPGF…SQHGLRRQKR (130 aa). Residues 121–131 are compositionally biased toward basic residues; sequence KAATHHHHHHH. Positions 121-141 are disordered; it reads KAATHHHHHHHDAPSKTQTEV. Residues 157 to 712 are Extracellular-facing; that stretch reads DWVIPPISCP…YAEAGLQVPA (556 aa). 5 consecutive Cadherin domains span residues 158–264, 265–377, 378–488, 489–597, and 607–688; these read WVIP…KPEF, TQAV…PPIF, NPTT…APIF, IPCP…GPIP, and KNPQ…VFVC. Residue D259 participates in Ca(2+) binding. Residue S282 is glycosylated (O-linked (Man...) serine). T287 carries O-linked (Man...) threonine glycosylation. D290 serves as a coordination point for Ca(2+). Residues T360, T472, T474, and T511 are each glycosylated (O-linked (Man...) threonine). N-linked (GlcNAc...) asparagine glycosylation is present at N560. 3 O-linked (Man...) threonine glycosylation sites follow: T578, T580, and T582. The N-linked (GlcNAc...) asparagine glycan is linked to N639. A helical transmembrane segment spans residues 713–733; the sequence is ILGILGGILALLILILLLLLF. The Cytoplasmic portion of the chain corresponds to 734–885; the sequence is VRRRRVVKEP…ADMYGGGEDD (152 aa). The segment at 750–770 is disordered; that stretch reads DTRDNVYYYDEEGGGEEDQDF. Y756, Y757, and Y758 each carry phosphotyrosine; by SRC. The span at 758–770 shows a compositional bias: acidic residues; it reads YDEEGGGEEDQDF. The interval 761 to 772 is required for binding CTNND1 and PSEN1; it reads EGGGEEDQDFDL. S773, S796, S841, S843, and S849 each carry phosphoserine. A disordered region spans residues 792-811; the sequence is PTLLSVPQYRPRPANPDEIG. Residues 814 to 885 form a required for binding alpha, beta and gamma catenins region; it reads IDENLKAADT…ADMYGGGEDD (72 aa).

Homodimer; disulfide-linked. Component of an E-cadherin/ catenin adhesion complex composed of at least E-cadherin/CDH1, beta-catenin/CTNNB1 or gamma-catenin/JUP, and potentially alpha-catenin/CTNNA1; the complex is located to adherens junctions. Found in a complex composed of CDH1, RAP1A and PKP3; PKP3 acts as a scaffold protein within the complex, the complex is required for CDH1 localization to mature desmosome cell junctions. Interacts with the TRPV4 and CTNNB1 complex. Interacts with CTNND1. The stable association of CTNNA1 is controversial as CTNNA1 was shown not to bind to F-actin when assembled in the complex. Alternatively, the CTNNA1-containing complex may be linked to F-actin by other proteins such as LIMA1. Interaction with PSEN1, cleaves CDH1 resulting in the disassociation of cadherin-based adherens junctions (CAJs). Interacts with AJAP1 and DLGAP5. Interacts with TBC1D2. Interacts with LIMA1. Interacts with CAV1. Interacts with PIP5K1C. Interacts with RAB8B. Interacts with DDR1; this stabilizes CDH1 at the cell surface and inhibits its internalization. Interacts with RAPGEF2. Interacts with KLRG1. Forms a ternary complex composed of ADAM10, CADH1 and EPHA4; within the complex, CADH1 is cleaved by ADAM10 which disrupts adherens junctions. Interacts with SPEF1. Interacts with CTNNB1 and PKP2. Interacts with AMOTL2; the interaction may facilitate binding of radial actin fibers to cell junction complexes. Interacts with DSG3; the interaction is required for CDH1 localization to developing adherens junctions. In terms of processing, during apoptosis or with calcium influx, cleaved by a membrane-bound metalloproteinase (ADAM10), PS1/gamma-secretase and caspase-3. Processing by the metalloproteinase, induced by calcium influx, causes disruption of cell-cell adhesion and the subsequent release of beta-catenin into the cytoplasm. The residual membrane-tethered cleavage product is rapidly degraded via an intracellular proteolytic pathway. Cleavage by caspase-3 releases the cytoplasmic tail resulting in disintegration of the actin microfilament system. The gamma-secretase-mediated cleavage promotes disassembly of adherens junctions. During development of the cochlear organ of Corti, cleavage by ADAM10 at adherens junctions promotes pillar cell separation. N-glycosylation at Asn-639 is essential for expression, folding and trafficking. Addition of bisecting N-acetylglucosamine by MGAT3 modulates its cell membrane location. Post-translationally, ubiquitinated by a SCF complex containing SKP2, which requires prior phosphorylation by CK1/CSNK1A1. Ubiquitinated by CBLL1/HAKAI, requires prior phosphorylation at Tyr-757. In terms of processing, O-glycosylated. O-manosylated by TMTC1, TMTC2, TMTC3 or TMTC4. Thr-287 and Thr-511 are O-mannosylated by TMTC2 or TMTC4 but not TMTC1 or TMTC3.

It localises to the cell junction. The protein resides in the adherens junction. Its subcellular location is the cell membrane. The protein localises to the endosome. It is found in the golgi apparatus. It localises to the trans-Golgi network. The protein resides in the cytoplasm. Its subcellular location is the desmosome. Cadherins are calcium-dependent cell adhesion proteins. They preferentially interact with themselves in a homophilic manner in connecting cells; cadherins may thus contribute to the sorting of heterogeneous cell types. CDH1 is involved in mechanisms regulating cell-cell adhesions, mobility and proliferation of epithelial cells. Promotes organization of radial actin fiber structure and cellular response to contractile forces, via its interaction with AMOTL2 which facilitates anchoring of radial actin fibers to CDH1 junction complexes at the cell membrane. Plays a role in the early stages of desmosome cell-cell junction formation via facilitating the recruitment of DSG2 and DSP to desmosome plaques. Has a potent invasive suppressor role. It is a ligand for integrin alpha-E/beta-7. Its function is as follows. E-Cad/CTF2 promotes non-amyloidogenic degradation of Abeta precursors. Has a strong inhibitory effect on APP C99 and C83 production. The polypeptide is Cadherin-1 (CDH1) (Canis lupus familiaris (Dog)).